A 641-amino-acid chain; its full sequence is Epithelial sodium channel subunit beta (641 aa).

Over 1–50 the chain is Cytoplasmic; sequence MHVKKYLLKGLHRLQKGPGYTYKELLVWYCDNTNTHGPKRIICEGPKKKA. Residues 51–71 form a helical membrane-spanning segment; that stretch reads MWFVLTLLFTSLVCWQWGLFI. At 72-533 the chain is on the extracellular side; sequence KTYLNWEVSV…GGQFGFWMGG (462 aa). 9 disulfide bridges follow: Cys98–Cys273, Cys185–Cys190, Cys197–Cys204, Cys250–Cys257, Cys362–Cys449, Cys387–Cys445, Cys391–Cys441, Cys400–Cys427, and Cys402–Cys416. A glycan (N-linked (GlcNAc...) asparagine) is linked at Asn141. Residue Asn379 is glycosylated (N-linked (GlcNAc...) asparagine). A helical membrane pass occupies residues 534–554; sequence SVLCLIEFGEIIIDFVWITII. At 555–641 the chain is on the cytoplasmic side; sequence KLVALAKSVR…IESDSEGDAI (87 aa). Residues 597–624 are disordered; that stretch reads TPGPDVEAYPHEQNPPIPGTPPPNYDSL. Pro residues predominate over residues 609-620; that stretch reads QNPPIPGTPPPN. Residues 617–621 carry the PY motif; recruits WW domain-containing proteins and is thereby required for ubiquitination and inhibition of the channel by NEDD4 and NEDD4L motif; that stretch reads PPPNY. A phosphoserine mark is found at Ser634 and Ser636.

It belongs to the amiloride-sensitive sodium channel (TC 1.A.6) family. SCNN1B subfamily. In terms of assembly, component of the heterotrimeric epithelial sodium channel (ENaC) composed of an alpha/SCNN1A, a beta/SCNN1B and a gamma/SCNN1G subunit. An additional delta/SCNN1D subunit can replace the alpha/SCNN1A subunit to form an alternative channel with specific properties. Interacts with WWP1 (via WW domains). Interacts with WWP2 (via WW domains); inhibits the channel. Interacts with the full-length immature form of PCSK9 (pro-PCSK9). Interacts (N-glycosylated) with BPIFA1; the interaction is direct and inhibits the proteolytic processing of SCNN1A and SCNN1G and the activation of ENaC. Post-translationally, ubiquitinated. Can be ubiquitinated at multiple sites and undergo monoubiquitination and polyubiquitination. Ubiquitination by NEDD4 or NEDD4L inhibits the ENaC channel through endocytosis, intracellular retention and degradation of its individual subunits. However, some studies could not confirm the ubiquitination of this subunit of the ENaC. In terms of processing, phosphorylated on serine and threonine residues. Aldosterone and insulin increase the basal level of phosphorylation. N-glycosylated. N-glycosylation is required for interaction with BPIFA1.

It is found in the apical cell membrane. The protein localises to the cytoplasmic vesicle membrane. It carries out the reaction Na(+)(in) = Na(+)(out). Originally identified and characterized by its inhibition by the diuretic drug amiloride. In terms of biological role, this is one of the three pore-forming subunits of the heterotrimeric epithelial sodium channel (ENaC), a critical regulator of sodium balance and fluid homeostasis. ENaC operates in epithelial tissues, where it mediates the electrodiffusion of sodium ions from extracellular fluid through the apical membrane of cells, with water following osmotically. It plays a key role in maintaining sodium homeostasis through electrogenic sodium reabsorption in the kidneys. Additionally, ENaC is essential for airway surface liquid homeostasis, which is crucial for proper mucus clearance. This Bos taurus (Bovine) protein is Epithelial sodium channel subunit beta.